The primary structure comprises 67 residues: Large ribosomal subunit protein bL35 (67 aa).

This sequence belongs to the bacterial ribosomal protein bL35 family.

In Rhizobium etli (strain CIAT 652), this protein is Large ribosomal subunit protein bL35.